Reading from the N-terminus, the 61-residue chain is Rubredoxin 3 (61 aa).

Residues 1 to 53 (MSSYRCPVCEYVYDESKGAPREGFPAGTPWDAVPDDWCCPDCGVREKLDFEPM) enclose the Rubredoxin-like domain. Fe cation contacts are provided by Cys6, Cys9, Cys39, and Cys42.

This sequence belongs to the rubredoxin family. It depends on Fe(3+) as a cofactor.

Functionally, involved in the hydrocarbon hydroxylating system, which transfers electrons from NADH to rubredoxin reductase and then through rubredoxin to alkane 1 monooxygenase. This chain is Rubredoxin 3 (rubA3), found in Rhodococcus erythropolis (Arthrobacter picolinophilus).